The primary structure comprises 489 residues: UDP-N-acetylmuramoylalanine--D-glutamate ligase (489 aa).

ATP is bound at residue 126–132 (GTNGKTT).

This sequence belongs to the MurCDEF family.

It localises to the cytoplasm. It carries out the reaction UDP-N-acetyl-alpha-D-muramoyl-L-alanine + D-glutamate + ATP = UDP-N-acetyl-alpha-D-muramoyl-L-alanyl-D-glutamate + ADP + phosphate + H(+). It functions in the pathway cell wall biogenesis; peptidoglycan biosynthesis. Its function is as follows. Cell wall formation. Catalyzes the addition of glutamate to the nucleotide precursor UDP-N-acetylmuramoyl-L-alanine (UMA). The protein is UDP-N-acetylmuramoylalanine--D-glutamate ligase of Mycobacterium avium (strain 104).